A 482-amino-acid chain; its full sequence is UDP-N-acetylmuramate--L-alanine ligase (482 aa).

Residue 129–135 (GTHGKTT) participates in ATP binding.

It belongs to the MurCDEF family.

It localises to the cytoplasm. The enzyme catalyses UDP-N-acetyl-alpha-D-muramate + L-alanine + ATP = UDP-N-acetyl-alpha-D-muramoyl-L-alanine + ADP + phosphate + H(+). It participates in cell wall biogenesis; peptidoglycan biosynthesis. In terms of biological role, cell wall formation. The sequence is that of UDP-N-acetylmuramate--L-alanine ligase from Acinetobacter baumannii (strain AB307-0294).